The sequence spans 579 residues: Isocitrate dehydrogenase kinase/phosphatase (579 aa).

Residues 324–330 (ADGTPGM) and Lys345 contribute to the ATP site. The active site involves Asp380.

Belongs to the AceK family.

The protein resides in the cytoplasm. The enzyme catalyses L-seryl-[isocitrate dehydrogenase] + ATP = O-phospho-L-seryl-[isocitrate dehydrogenase] + ADP + H(+). Bifunctional enzyme which can phosphorylate or dephosphorylate isocitrate dehydrogenase (IDH) on a specific serine residue. This is a regulatory mechanism which enables bacteria to bypass the Krebs cycle via the glyoxylate shunt in response to the source of carbon. When bacteria are grown on glucose, IDH is fully active and unphosphorylated, but when grown on acetate or ethanol, the activity of IDH declines drastically concomitant with its phosphorylation. This is Isocitrate dehydrogenase kinase/phosphatase from Xanthomonas euvesicatoria pv. vesicatoria (strain 85-10) (Xanthomonas campestris pv. vesicatoria).